Here is a 652-residue protein sequence, read N- to C-terminus: UvrABC system protein C (652 aa).

A GIY-YIG domain is found at 20 to 99 (PEPGCYLMRD…IKNHQPHFNV (80 aa)). The region spanning 209–244 (DELQRLLDEQMNRYAERLDFESAARVRDQLQGLDQL) is the UVR domain.

It belongs to the UvrC family. Interacts with UvrB in an incision complex.

The protein resides in the cytoplasm. Its function is as follows. The UvrABC repair system catalyzes the recognition and processing of DNA lesions. UvrC both incises the 5' and 3' sides of the lesion. The N-terminal half is responsible for the 3' incision and the C-terminal half is responsible for the 5' incision. The sequence is that of UvrABC system protein C from Parasynechococcus marenigrum (strain WH8102).